Consider the following 506-residue polypeptide: Ribose import ATP-binding protein RbsA 2 (506 aa).

ABC transporter domains lie at 5–241 (LRLS…VGRR) and 254–498 (ADAP…TAGT). 37-44 (GENGAGKS) contributes to the ATP binding site.

Belongs to the ABC transporter superfamily. Ribose importer (TC 3.A.1.2.1) family. In terms of assembly, the complex is composed of an ATP-binding protein (RbsA), two transmembrane proteins (RbsC) and a solute-binding protein (RbsB).

The protein resides in the cell inner membrane. The catalysed reaction is D-ribose(out) + ATP + H2O = D-ribose(in) + ADP + phosphate + H(+). Part of the ABC transporter complex RbsABC involved in ribose import. Responsible for energy coupling to the transport system. In Burkholderia cenocepacia (strain HI2424), this protein is Ribose import ATP-binding protein RbsA 2.